Reading from the N-terminus, the 485-residue chain is Ribosomal protein uS12 methylthiotransferase RimO (485 aa).

Residues 19–135 enclose the MTTase N-terminal domain; sequence VKVGFISLGC…IGEVVAGILA (117 aa). Cys28, Cys64, Cys98, Cys172, Cys176, and Cys179 together coordinate [4Fe-4S] cluster. A Radical SAM core domain is found at 158–387; it reads ATPGYTAYLK…MEVQQEIARR (230 aa). The region spanning 390–461 is the TRAM domain; sequence QLQVGRELEV…DYDLLGEATE (72 aa).

The protein belongs to the methylthiotransferase family. RimO subfamily. The cofactor is [4Fe-4S] cluster.

It is found in the cytoplasm. The enzyme catalyses L-aspartate(89)-[ribosomal protein uS12]-hydrogen + (sulfur carrier)-SH + AH2 + 2 S-adenosyl-L-methionine = 3-methylsulfanyl-L-aspartate(89)-[ribosomal protein uS12]-hydrogen + (sulfur carrier)-H + 5'-deoxyadenosine + L-methionine + A + S-adenosyl-L-homocysteine + 2 H(+). Functionally, catalyzes the methylthiolation of an aspartic acid residue of ribosomal protein uS12. This Symbiobacterium thermophilum (strain DSM 24528 / JCM 14929 / IAM 14863 / T) protein is Ribosomal protein uS12 methylthiotransferase RimO.